The primary structure comprises 248 residues: Large ribosomal subunit protein uL4 (248 aa).

Positions 44–109 (QDTGTDEYAG…LDINTKERKL (66 aa)) are disordered. Residues 92–109 (PKAEKDRGLDINTKERKL) are compositionally biased toward basic and acidic residues.

It belongs to the universal ribosomal protein uL4 family. In terms of assembly, part of the 50S ribosomal subunit.

In terms of biological role, one of the primary rRNA binding proteins, this protein initially binds near the 5'-end of the 23S rRNA. It is important during the early stages of 50S assembly. It makes multiple contacts with different domains of the 23S rRNA in the assembled 50S subunit and ribosome. Its function is as follows. Forms part of the polypeptide exit tunnel. The protein is Large ribosomal subunit protein uL4 of Natronomonas pharaonis (strain ATCC 35678 / DSM 2160 / CIP 103997 / JCM 8858 / NBRC 14720 / NCIMB 2260 / Gabara) (Halobacterium pharaonis).